A 206-amino-acid polypeptide reads, in one-letter code: Small ribosomal subunit protein uS4 (206 aa).

An S4 RNA-binding domain is found at 96–156; sequence GRLDNVVYRM…EKAKKQARIK (61 aa).

It belongs to the universal ribosomal protein uS4 family. In terms of assembly, part of the 30S ribosomal subunit. Contacts protein S5. The interaction surface between S4 and S5 is involved in control of translational fidelity.

In terms of biological role, one of the primary rRNA binding proteins, it binds directly to 16S rRNA where it nucleates assembly of the body of the 30S subunit. Functionally, with S5 and S12 plays an important role in translational accuracy. The sequence is that of Small ribosomal subunit protein uS4 from Tolumonas auensis (strain DSM 9187 / NBRC 110442 / TA 4).